The sequence spans 374 residues: Chaperone protein DnaJ (374 aa).

One can recognise a J domain in the interval 5–70; that stretch reads DYYEILGVSR…QKRAAYDQYG (66 aa). Residues 129-207 form a CR-type zinc finger; the sequence is GVTREIRIPT…CHGHGRVEKS (79 aa). Zn(2+) is bound by residues C142, C145, C159, C162, C181, C184, C195, and C198. CXXCXGXG motif repeat units follow at residues 142-149, 159-166, 181-188, and 195-202; these read CDVCHGSG, CPTCHGQG, CPTCQGQG, and CTKCHGHG.

It belongs to the DnaJ family. Homodimer. Zn(2+) is required as a cofactor.

The protein resides in the cytoplasm. Participates actively in the response to hyperosmotic and heat shock by preventing the aggregation of stress-denatured proteins and by disaggregating proteins, also in an autonomous, DnaK-independent fashion. Unfolded proteins bind initially to DnaJ; upon interaction with the DnaJ-bound protein, DnaK hydrolyzes its bound ATP, resulting in the formation of a stable complex. GrpE releases ADP from DnaK; ATP binding to DnaK triggers the release of the substrate protein, thus completing the reaction cycle. Several rounds of ATP-dependent interactions between DnaJ, DnaK and GrpE are required for fully efficient folding. Also involved, together with DnaK and GrpE, in the DNA replication of plasmids through activation of initiation proteins. This is Chaperone protein DnaJ from Sodalis glossinidius (strain morsitans).